The chain runs to 270 residues: ES1 protein, mitochondrial (270 aa).

As to expression, expressed specifically in the inner segments of cone photoreceptor cells of the retina (at protein level).

The protein resides in the mitochondrion. In terms of biological role, plays a role in promoting mitochondrial enlargement in cone photoreceptor cells in a fusion-independent and ATP-dependent manner. The protein is ES1 protein, mitochondrial of Danio rerio (Zebrafish).